Reading from the N-terminus, the 217-residue chain is Probable GTP-binding protein EngB (217 aa).

Residues 24-207 form the EngB-type G domain; that stretch reads SQPEICFAGR…HALIESWLIP (184 aa). GTP contacts are provided by residues 32–39, 59–63, 81–84, 148–151, and 185–188; these read GRSNAGKS, GRTQH, DLPG, TKCD, and LFSA. Mg(2+)-binding residues include serine 39 and threonine 61.

The protein belongs to the TRAFAC class TrmE-Era-EngA-EngB-Septin-like GTPase superfamily. EngB GTPase family. It depends on Mg(2+) as a cofactor.

Its function is as follows. Necessary for normal cell division and for the maintenance of normal septation. This chain is Probable GTP-binding protein EngB, found in Paraburkholderia xenovorans (strain LB400).